Here is a 296-residue protein sequence, read N- to C-terminus: Nitrogenase iron protein (296 aa).

Residue 11–18 (GKGGIGKS) participates in ATP binding. C99 contacts [4Fe-4S] cluster. An ADP-ribosylarginine; by dinitrogenase reductase ADP-ribosyltransferase modification is found at R102. C133 lines the [4Fe-4S] cluster pocket.

It belongs to the NifH/BchL/ChlL family. Homodimer. [4Fe-4S] cluster serves as cofactor. Post-translationally, the reversible ADP-ribosylation of Arg-102 inactivates the nitrogenase reductase and regulates nitrogenase activity.

The catalysed reaction is N2 + 8 reduced [2Fe-2S]-[ferredoxin] + 16 ATP + 16 H2O = H2 + 8 oxidized [2Fe-2S]-[ferredoxin] + 2 NH4(+) + 16 ADP + 16 phosphate + 6 H(+). Its function is as follows. The key enzymatic reactions in nitrogen fixation are catalyzed by the nitrogenase complex, which has 2 components: the iron protein and the molybdenum-iron protein. The polypeptide is Nitrogenase iron protein (nifH1) (Sinorhizobium fredii (strain NBRC 101917 / NGR234)).